The following is a 304-amino-acid chain: Ribosomal RNA small subunit methyltransferase H (304 aa).

Residues 37-39 (GGH), D57, F79, D100, and H107 each bind S-adenosyl-L-methionine.

Belongs to the methyltransferase superfamily. RsmH family.

It is found in the cytoplasm. It carries out the reaction cytidine(1402) in 16S rRNA + S-adenosyl-L-methionine = N(4)-methylcytidine(1402) in 16S rRNA + S-adenosyl-L-homocysteine + H(+). Functionally, specifically methylates the N4 position of cytidine in position 1402 (C1402) of 16S rRNA. The polypeptide is Ribosomal RNA small subunit methyltransferase H (Phocaeicola vulgatus (strain ATCC 8482 / DSM 1447 / JCM 5826 / CCUG 4940 / NBRC 14291 / NCTC 11154) (Bacteroides vulgatus)).